We begin with the raw amino-acid sequence, 92 residues long: Small ribosomal subunit protein uS19 (92 aa).

It belongs to the universal ribosomal protein uS19 family.

Its function is as follows. Protein S19 forms a complex with S13 that binds strongly to the 16S ribosomal RNA. This is Small ribosomal subunit protein uS19 from Caulobacter vibrioides (strain ATCC 19089 / CIP 103742 / CB 15) (Caulobacter crescentus).